The chain runs to 111 residues: Small ribosomal subunit protein bS16 (111 aa).

Belongs to the bacterial ribosomal protein bS16 family.

This is Small ribosomal subunit protein bS16 from Rickettsia prowazekii (strain Madrid E).